A 437-amino-acid chain; its full sequence is Enolase (437 aa).

Gln-166 is a (2R)-2-phosphoglycerate binding site. The active-site Proton donor is the Glu-208. Positions 245, 295, and 322 each coordinate Mg(2+). Lys-347, Arg-376, Ser-377, and Lys-398 together coordinate (2R)-2-phosphoglycerate. The active-site Proton acceptor is Lys-347.

The protein belongs to the enolase family. The cofactor is Mg(2+).

Its subcellular location is the cytoplasm. It is found in the secreted. It localises to the cell surface. It catalyses the reaction (2R)-2-phosphoglycerate = phosphoenolpyruvate + H2O. It participates in carbohydrate degradation; glycolysis; pyruvate from D-glyceraldehyde 3-phosphate: step 4/5. Catalyzes the reversible conversion of 2-phosphoglycerate (2-PG) into phosphoenolpyruvate (PEP). It is essential for the degradation of carbohydrates via glycolysis. The protein is Enolase of Lachnoclostridium phytofermentans (strain ATCC 700394 / DSM 18823 / ISDg) (Clostridium phytofermentans).